The following is a 347-amino-acid chain: Phosphoribosylformylglycinamidine cyclo-ligase (347 aa).

It belongs to the AIR synthase family.

It localises to the cytoplasm. The enzyme catalyses 2-formamido-N(1)-(5-O-phospho-beta-D-ribosyl)acetamidine + ATP = 5-amino-1-(5-phospho-beta-D-ribosyl)imidazole + ADP + phosphate + H(+). It functions in the pathway purine metabolism; IMP biosynthesis via de novo pathway; 5-amino-1-(5-phospho-D-ribosyl)imidazole from N(2)-formyl-N(1)-(5-phospho-D-ribosyl)glycinamide: step 2/2. The protein is Phosphoribosylformylglycinamidine cyclo-ligase of Yersinia pseudotuberculosis serotype O:1b (strain IP 31758).